A 91-amino-acid polypeptide reads, in one-letter code: Small ribosomal subunit protein uS19 (91 aa).

The protein belongs to the universal ribosomal protein uS19 family.

In terms of biological role, protein S19 forms a complex with S13 that binds strongly to the 16S ribosomal RNA. This is Small ribosomal subunit protein uS19 from Prochlorococcus marinus (strain MIT 9303).